Consider the following 710-residue polypeptide: Solute carrier family 15 member 1 (710 aa).

Residues 1–21 form a helical membrane-spanning segment; that stretch reads MGMSKSRGCFGYPLSIFFIVV. At 22-53 the chain is on the extracellular side; it reads NEFCERFSYYGMRALLVLYFRNFLGWDDDLST. The helical transmembrane segment at 54–74 threads the bilayer; sequence AIYHTFVALCYLTPILGALIA. Residues 75 to 82 lie on the Cytoplasmic side of the membrane; the sequence is DSWLGKFK. Residues 83 to 103 traverse the membrane as a helical segment; sequence TIVSLSIVYTIGQAVISVSSI. The Extracellular segment spans residues 104–118; sequence NDLTDHDHDGSPNNL. The helical transmembrane segment at 119-139 threads the bilayer; the sequence is PLHVALSMIGLALIALGTGGI. Over 140 to 161 the chain is Cytoplasmic; the sequence is KPCVSAFGGDQFEEGQEKQRNR. A helical transmembrane segment spans residues 162 to 182; it reads FFSIFYLAINAGSLLSTIITP. Topologically, residues 183 to 198 are extracellular; it reads ILRVQQCGIHSQQACY. Residues 199 to 219 form a helical membrane-spanning segment; sequence PLAFGVPAALMAVALIVFVLG. The Cytoplasmic portion of the chain corresponds to 220–276; it reads SGMYKKFQPQGNIMGKVAKCIRFAIKNRFRHRSKAFPKRNHWLDWAKEKYDERLISQ. The helical transmembrane segment at 277-297 threads the bilayer; that stretch reads IKIMTKVMFLYIPLPMFWALF. At 298–327 the chain is on the extracellular side; the sequence is DQQGSRWTLQATTMTGKIGTIEIQPDQMQT. Residues 328–348 form a helical membrane-spanning segment; the sequence is VNAILIVIMVPIVDAVVYPLI. Over 349–361 the chain is Cytoplasmic; that stretch reads AKCGFNFTSLKKM. The helical transmembrane segment at 362-382 threads the bilayer; it reads TVGMFLASMAFVVAAIVQVEI. The Extracellular segment spans residues 383–586; that stretch reads DKTLPVFPSG…PPNTVNMALQ (204 aa). Residues 383–586 form an extracellular domain (ECD) region; that stretch reads DKTLPVFPSG…PPNTVNMALQ (204 aa). N-linked (GlcNAc...) asparagine glycans are attached at residues Asn415, Asn439, Asn510, Asn532, and Asn539. Residues 587 to 607 traverse the membrane as a helical segment; it reads IPQYFLLTCGEVVFSVTGLEF. Residues 608-621 lie on the Cytoplasmic side of the membrane; that stretch reads SYSQAPSNMKSVLQ. The helical transmembrane segment at 622 to 642 threads the bilayer; sequence AGWLLTVAIGNIIVLIVAEAG. Over 643–647 the chain is Extracellular; the sequence is HFDKQ. The helical transmembrane segment at 648-668 threads the bilayer; the sequence is WAEYVLFASLLLVVCIIFAIM. Over 669-710 the chain is Cytoplasmic; it reads ARFYTYINPAEIEAQFDEDEKKKGVGKENPYSSLEPVSQTNM. Residues 687-710 are disordered; it reads DEKKKGVGKENPYSSLEPVSQTNM. Polar residues predominate over residues 698–710; it reads PYSSLEPVSQTNM.

Belongs to the major facilitator superfamily. Proton-dependent oligopeptide transporter (POT/PTR) (TC 2.A.17) family. Interacts (via extracellular domain region) with trypsin. As to expression, highly expressed in small intestine. Expression is restricted to pinealocytes.

The protein resides in the apical cell membrane. The enzyme catalyses a dipeptide(out) + H(+)(out) = a dipeptide(in) + H(+)(in). The catalysed reaction is an L-amino acid tripeptide(out) + H(+)(out) = an L-amino acid tripeptide(in) + H(+)(in). It catalyses the reaction L-alanyl-L-lysine(out) + H(+)(out) = L-alanyl-L-lysine(in) + H(+)(in). It carries out the reaction L-alanyl-L-proline(out) + H(+)(out) = L-alanyl-L-proline(in) + H(+)(in). The enzyme catalyses L-alanyl-L-valine(out) + H(+)(out) = L-alanyl-L-valine(in) + H(+)(in). The catalysed reaction is carnosine(out) + H(+)(out) = carnosine(in) + H(+)(in). It catalyses the reaction glycyl-L-glutamine(out) + H(+)(out) = glycyl-L-glutamine(in) + H(+)(in). It carries out the reaction glycyl-L-leucine(out) + H(+)(out) = glycyl-L-leucine(in) + H(+)(in). The enzyme catalyses glycyl-L-proline(out) + H(+)(out) = glycyl-L-proline(in) + H(+)(in). The catalysed reaction is glycyl-sarcosine(out) + H(+)(out) = glycyl-sarcosine(in) + H(+)(in). It catalyses the reaction L-leucyl-L-leucine(out) + H(+)(out) = L-leucyl-L-leucine(in) + H(+)(in). It carries out the reaction L-leucyl-L-proline(out) + H(+)(out) = L-leucyl-L-proline(in) + H(+)(in). The enzyme catalyses L-phenylalanyl-L-leucine(out) + H(+)(out) = L-phenylalanyl-L-leucine(in) + H(+)(in). The catalysed reaction is L-phenylalanyl-L-phenylalanine(out) + H(+)(out) = L-phenylalanyl-L-phenylalanine(in) + H(+)(in). It catalyses the reaction L-lysyl-glycine(out) + H(+)(out) = L-lysyl-glycine(in) + H(+)(in). It carries out the reaction L-tyrosylglycine(out) + H(+)(out) = L-tyrosylglycine(in) + H(+)(in). The enzyme catalyses L-alanyl-L-aspartate(out) + 2 H(+)(out) = L-alanyl-L-aspartate(in) + 2 H(+)(in). The catalysed reaction is L-aspartyl-glycine(out) + 2 H(+)(out) = L-aspartyl-glycine(in) + 2 H(+)(in). It catalyses the reaction glycyl-L-aspartate(out) + 2 H(+)(out) = glycyl-L-aspartate(in) + 2 H(+)(in). It carries out the reaction glycyl-L-glutamate(out) + 2 H(+)(out) = glycyl-L-glutamate(in) + 2 H(+)(in). The enzyme catalyses L-alanyl-L-leucyl-L-alanine(out) + H(+)(out) = L-alanyl-L-leucyl-L-alanine(in) + H(+)(in). The catalysed reaction is L-alanyl-L-prolylglycine(out) + H(+)(out) = L-alanyl-L-prolylglycine(in) + H(+)(in). It catalyses the reaction glycylglycyl-L-isoleucine(out) + H(+)(out) = glycylglycyl-L-isoleucine(in) + H(+)(in). It carries out the reaction glycylglycyl-L-proline(out) + H(+)(out) = glycylglycyl-L-proline(in) + H(+)(in). The enzyme catalyses L-methionyl-L-phenylalanyl-L-methionine(out) + H(+)(out) = L-methionyl-L-phenylalanyl-L-methionine(in) + H(+)(in). The catalysed reaction is N-acetyl-D-muramoyl-L-alanyl-D-isoglutamine(out) + 2 H(+)(out) = N-acetyl-D-muramoyl-L-alanyl-D-isoglutamine(in) + 2 H(+)(in). It catalyses the reaction N(alpha)-formyl-L-methionyl-L-leucyl-L-phenylalanine(out) + 2 H(+)(out) = N(alpha)-formyl-L-methionyl-L-leucyl-L-phenylalanine(in) + 2 H(+)(in). In terms of biological role, electrogenic proton-coupled amino-acid transporter that transports oligopeptides of 2 to 4 amino acids with a preference for dipeptides. Transports neutral and monovalently charged peptides with a proton to peptide stoichiometry of 1:1 or 2:1. Primarily responsible for the absorption of dietary di- and tripeptides from the small intestinal lumen. Mediates transepithelial transport of muramyl and N-formylated bacterial dipeptides contributing to recognition of pathogenic bacteria by the mucosal immune system. The protein is Solute carrier family 15 member 1 (Slc15a1) of Rattus norvegicus (Rat).